A 442-amino-acid chain; its full sequence is Serum response factor-binding protein 1 (442 aa).

Coiled coils occupy residues 55–77 (EDALLKNQRRAQRLLQEIHAMKE) and 118–140 (LLKRKVDALKAAIQAFKDARQNA). 2 disordered regions span residues 137 to 336 (RQNA…LETH) and 358 to 442 (FHSL…TFDD). 2 stretches are compositionally biased toward basic and acidic residues: residues 149 to 159 (ASKESQCEDIP) and 167 to 188 (ESQHPERTVVGEQKGKDKDPTT). K202 participates in a covalent cross-link: Glycyl lysine isopeptide (Lys-Gly) (interchain with G-Cter in SUMO2). Residue S215 is modified to Phosphoserine. The segment covering 237 to 247 (GNHSQGKASTR) has biased composition (polar residues). Positions 266 to 278 (VSEEEKEYFDDST) are enriched in acidic residues. 3 positions are modified to phosphoserine: S277, S292, and S294. K329 is covalently cross-linked (Glycyl lysine isopeptide (Lys-Gly) (interchain with G-Cter in SUMO2)). Phosphoserine is present on S362. The span at 367-382 (SRRDPREQAPKNKAPD) shows a compositional bias: basic and acidic residues.

Interacts with SRF. Forms complexes with SRF and SRF cofactors ARID2, MYOCD and NKX2-5. Interacts with the N-terminus of SLC2A4.

The protein localises to the cytoplasm. The protein resides in the perinuclear region. Its function is as follows. May be involved in regulating transcriptional activation of cardiac genes during the aging process. May play a role in biosynthesis and/or processing of SLC2A4 in adipose cells. In Rattus norvegicus (Rat), this protein is Serum response factor-binding protein 1.